The primary structure comprises 940 residues: Isoleucine--tRNA ligase (940 aa).

A 'HIGH' region motif is present at residues 58–68; it reads PYANGDIHIGH. Position 564 (glutamate 564) interacts with L-isoleucyl-5'-AMP. Residues 605–609 carry the 'KMSKS' region motif; that stretch reads KMSKS. ATP is bound at residue lysine 608. Positions 903, 906, 923, and 926 each coordinate Zn(2+).

This sequence belongs to the class-I aminoacyl-tRNA synthetase family. IleS type 1 subfamily. Monomer. Zn(2+) serves as cofactor.

The protein localises to the cytoplasm. It catalyses the reaction tRNA(Ile) + L-isoleucine + ATP = L-isoleucyl-tRNA(Ile) + AMP + diphosphate. Its function is as follows. Catalyzes the attachment of isoleucine to tRNA(Ile). As IleRS can inadvertently accommodate and process structurally similar amino acids such as valine, to avoid such errors it has two additional distinct tRNA(Ile)-dependent editing activities. One activity is designated as 'pretransfer' editing and involves the hydrolysis of activated Val-AMP. The other activity is designated 'posttransfer' editing and involves deacylation of mischarged Val-tRNA(Ile). The chain is Isoleucine--tRNA ligase from Shewanella halifaxensis (strain HAW-EB4).